We begin with the raw amino-acid sequence, 512 residues long: Aldehyde dehydrogenase B (512 aa).

Residues glutamate 268 and cysteine 307 contribute to the active site.

Homotetramer.

It catalyses the reaction an aldehyde + NADP(+) + H2O = a carboxylate + NADPH + 2 H(+). The catalysed reaction is acetaldehyde + NADP(+) + H2O = acetate + NADPH + 2 H(+). It carries out the reaction chloroacetaldehyde + NADP(+) + H2O = chloroacetate + NADPH + 2 H(+). The enzyme catalyses propanal + NADP(+) + H2O = propanoate + NADPH + 2 H(+). With respect to regulation, magnesium increases enzyme activity with various substrates. Its function is as follows. Catalyzes the NADP(+)-dependent oxidation of diverse aldehydes to their corresponding carboxylic acids, with a preference for acetaldehyde and chloroacetaldehyde. May play a role in detoxifying aldehydes present during stationary phase. Cannot use NAD(+) instead of NADP(+) as the electron acceptor. To a lesser extent is also able to oxidize propionaldehyde (propanal), benzaldehyde, mafosfamide, and 4-hydroperoxycyclophosphamide. Does not use either glyceraldehyde or glycolaldehyde as substrates. The polypeptide is Aldehyde dehydrogenase B (Escherichia coli (strain K12)).